The following is a 586-amino-acid chain: Frizzled-10-A (586 aa).

The N-terminal stretch at 1–26 is a signal peptide; the sequence is MDVSGVTGLLRGTALLLVLAAALCSA. The Extracellular segment spans residues 27–230; the sequence is ISSINPDRSG…DVYWSKDDKK (204 aa). One can recognise an FZ domain in the interval 35–156; sequence SGDGRCQAIE…NDPNYLCMEA (122 aa). Disulfide bonds link cysteine 40–cysteine 101, cysteine 48–cysteine 94, cysteine 85–cysteine 123, cysteine 112–cysteine 153, and cysteine 116–cysteine 140. Residue asparagine 54 is glycosylated (N-linked (GlcNAc...) asparagine). Asparagine 159 is a glycosylation site (N-linked (GlcNAc...) asparagine). The segment at 161–199 is disordered; that stretch reads TDETPRGSSMLPPIFRPQRPSSGHEIYPKDPTSRSSCEN. Residues 231-251 form a helical membrane-spanning segment; that stretch reads FAFIWIAIWSILCFFSSAFTV. At 252-267 the chain is on the cytoplasmic side; the sequence is LTFLVDPLRFKYPERP. The helical transmembrane segment at 268–288 threads the bilayer; sequence IIFLSMCYCVYSVGYIIRLFA. The Extracellular portion of the chain corresponds to 289 to 315; the sequence is GADSIACDRDSGQLYVIQEGLESTGCT. The chain crosses the membrane as a helical span at residues 316-336; that stretch reads IVFLILYYFGMASSLWWVILT. Over 337–356 the chain is Cytoplasmic; that stretch reads LTWFLAAGKKWGHEAIEANS. Residues 357 to 377 traverse the membrane as a helical segment; that stretch reads SYFHLAAWAIPAVKTIMILVM. The Extracellular portion of the chain corresponds to 378–401; that stretch reads RRVAGDELTGVCYVGSMDVNALTG. The chain crosses the membrane as a helical span at residues 402–422; that stretch reads FVLIPLACYLIIGTSFILSGF. At 423-448 the chain is on the cytoplasmic side; sequence VALFHIRRVMKTGGENTDKLEKLMVR. A helical transmembrane segment spans residues 449-469; that stretch reads IGVFSVLYTVPATCVIACYFY. The Extracellular segment spans residues 470–507; that stretch reads ERLNMDFWKILATQDKCKMDSQTKTLDCTMTSSIPAVE. The chain crosses the membrane as a helical span at residues 508 to 528; that stretch reads IFMVKIFMLLVVGITSGMWIW. Over 529-586 the chain is Cytoplasmic; sequence TSKTVQSWQNVFSKRLKKRNRSKPASVITSAGIYKKPQHPPKVHHGKYESALQSPTCV. Positions 531 to 536 match the Lys-Thr-X-X-X-Trp motif, mediates interaction with the PDZ domain of Dvl family members motif; sequence KTVQSW. Positions 563–586 are disordered; the sequence is KKPQHPPKVHHGKYESALQSPTCV. Over residues 564–573 the composition is skewed to basic residues; that stretch reads KPQHPPKVHH. The short motif at 584–586 is the PDZ-binding element; sequence TCV.

Belongs to the G-protein coupled receptor Fz/Smo family. As to expression, expressed in liver, lung, brain, testis, stomach, kidney, eye, skeletal muscle and skin.

The protein localises to the cell membrane. Its function is as follows. Receptor for Wnt proteins. Most of frizzled receptors are coupled to the beta-catenin canonical signaling pathway, which leads to the activation of disheveled proteins, inhibition of GSK-3 kinase, nuclear accumulation of beta-catenin and activation of Wnt target genes. A second signaling pathway involving PKC and calcium fluxes has been seen for some family members, but it is not yet clear if it represents a distinct pathway or if it can be integrated in the canonical pathway, as PKC seems to be required for Wnt-mediated inactivation of GSK-3 kinase. Both pathways seem to involve interactions with G-proteins. May be involved in transduction and intercellular transmission of polarity information during tissue morphogenesis and/or in differentiated tissues. Activated by Wnt8. Could have an antagonizing activity in the morphogenesis during development. The polypeptide is Frizzled-10-A (fzd10-a) (Xenopus laevis (African clawed frog)).